The sequence spans 298 residues: Foldase protein PrsA 1 (298 aa).

The N-terminal stretch at 1–23 is a signal peptide; it reads MNKTWKKAATVLAFAGIALSATA. Cys-24 is lipidated: N-palmitoyl cysteine. Cys-24 carries S-diacylglycerol cysteine lipidation. One can recognise a PpiC domain in the interval 141–234; it reads QPEVTVQHIL…YGYHVIKMIK (94 aa).

This sequence belongs to the PrsA family.

Its subcellular location is the cell membrane. It carries out the reaction [protein]-peptidylproline (omega=180) = [protein]-peptidylproline (omega=0). In terms of biological role, plays a major role in protein secretion by helping the post-translocational extracellular folding of several secreted proteins. In Lactobacillus johnsonii (strain CNCM I-12250 / La1 / NCC 533), this protein is Foldase protein PrsA 1 (prsA1).